Reading from the N-terminus, the 243-residue chain is DNA repair protein RecO (243 aa).

The protein belongs to the RecO family.

Functionally, involved in DNA repair and RecF pathway recombination. This Frankia casuarinae (strain DSM 45818 / CECT 9043 / HFP020203 / CcI3) protein is DNA repair protein RecO.